Reading from the N-terminus, the 245-residue chain is MKIDYLTLFPEMFDGVLNHSILKRAQDKEIISVNTVNFRDYAINKHNQVDDYPFGGGQGMVLKPEPVFNAMKDLQRTDQTRVILMCPQGRPFSQEIAQELSEAEHIVFICGHYEGYDERIRTHLVTDEISIGDYVLTGGELPAMTMTDAIVRLIPGVLGNQQSHQDDSFSDGLLEFPQYTRPREFENMTVPDVLLSGNHANIEQWRHEQKLIRTYHKRPDLLDRYPLTEDDEKFIESYKKQLKNN.

Residues Gly111 and 131–136 (IGDYVL) each bind S-adenosyl-L-methionine.

Belongs to the RNA methyltransferase TrmD family. Homodimer.

Its subcellular location is the cytoplasm. It carries out the reaction guanosine(37) in tRNA + S-adenosyl-L-methionine = N(1)-methylguanosine(37) in tRNA + S-adenosyl-L-homocysteine + H(+). Its function is as follows. Specifically methylates guanosine-37 in various tRNAs. The sequence is that of tRNA (guanine-N(1)-)-methyltransferase from Staphylococcus haemolyticus (strain JCSC1435).